The sequence spans 222 residues: Putative hemin import ATP-binding protein HrtA (222 aa).

An ABC transporter domain is found at 3–222 (LQVKDIKKSF…ELDDGVITNA (220 aa)). 39–46 (GASGSGKT) contacts ATP.

Belongs to the ABC transporter superfamily. HrtA family. In terms of assembly, the complex is composed of two ATP-binding proteins (HrtA), two transmembrane proteins (HrtB) and a solute-binding protein.

It is found in the cell membrane. Functionally, part of the ABC transporter complex hrt involved in hemin import. Responsible for energy coupling to the transport system. The sequence is that of Putative hemin import ATP-binding protein HrtA (hrtA) from Staphylococcus saprophyticus subsp. saprophyticus (strain ATCC 15305 / DSM 20229 / NCIMB 8711 / NCTC 7292 / S-41).